A 268-amino-acid polypeptide reads, in one-letter code: Putative carbamate hydrolase RutD (268 aa).

One can recognise an AB hydrolase-1 domain in the interval 24–243 (VILSAGLGGS…NATLDIAPWG (220 aa)).

Belongs to the AB hydrolase superfamily. Hydrolase RutD family.

The enzyme catalyses carbamate + 2 H(+) = NH4(+) + CO2. Involved in pyrimidine catabolism. May facilitate the hydrolysis of carbamate, a reaction that can also occur spontaneously. In Caulobacter sp. (strain K31), this protein is Putative carbamate hydrolase RutD.